The sequence spans 152 residues: Putative rho GDP-dissociation inhibitor 2 (152 aa).

The protein belongs to the Rho GDI family.

It localises to the cytoplasm. Its function is as follows. Regulates the GDP/GTP exchange reaction of the Rho proteins by inhibiting the dissociation of GDP from them, and the subsequent binding of GTP to them. In Dictyostelium discoideum (Social amoeba), this protein is Putative rho GDP-dissociation inhibitor 2 (rdiB).